A 427-amino-acid chain; its full sequence is Lactadherin (427 aa).

A signal peptide spans M1–A22. EGF-like domains are found at residues S24–N61 and E64–E108. 3 cysteine pairs are disulfide-bonded: C28–C39, C33–C49, and C51–C60. The N-linked (GlcNAc...) asparagine glycan is linked to N61. Disulfide bonds link C68–C79, C73–C96, C98–C107, C111–C267, C254–C258, and C272–C427. Residues R87 to D89 carry the Cell attachment site motif. 2 F5/8 type C domains span residues C111–C267 and C272–C427. The N-linked (GlcNAc...) asparagine glycan is linked to N230. 2 N-linked (GlcNAc...) asparagine glycosylation sites follow: N280 and N390.

As to expression, spleen, lung, heart, brain and muscle.

It localises to the membrane. It is found in the secreted. Its subcellular location is the cytoplasmic vesicle. The protein localises to the secretory vesicle. The protein resides in the acrosome membrane. Contributes to phagocytic removal of apoptotic cells in many tissues. Plays an important role in the maintenance of intestinal epithelial homeostasis and the promotion of mucosal healing. Promotes VEGF-dependent neovascularization. Specific ligand for the alpha-v/beta-3 and alpha-v/beta-5 receptors. Also binds to phosphatidylserine-enriched cell surfaces in a receptor-independent manner. Zona pellucida-binding protein which may play a role in gamete interaction. Appears to participate in the O-acetylation of GD3 ganglioside sialic acid. The protein is Lactadherin (Mfge8) of Rattus norvegicus (Rat).